The primary structure comprises 289 residues: Cell division protein ZipA (289 aa).

Met-1 is a topological domain (periplasmic). A helical membrane pass occupies residues 2 to 22 (DIGLREWLIVIGLIVIAGILF). The Cytoplasmic portion of the chain corresponds to 23–289 (DGWRRMRGGK…HERRSLMQKR (267 aa)). The disordered stretch occupies residues 66-141 (REPSFDEQDL…KEREKAPAVA (76 aa)). Residues 81-99 (REAKERKGGKRQEEPRQGD) show a composition bias toward basic and acidic residues. Residues 100 to 114 (LDLDEGLALEADPSD) are compositionally biased toward acidic residues.

This sequence belongs to the ZipA family. In terms of assembly, interacts with FtsZ via their C-terminal domains.

The protein localises to the cell inner membrane. Its function is as follows. Essential cell division protein that stabilizes the FtsZ protofilaments by cross-linking them and that serves as a cytoplasmic membrane anchor for the Z ring. Also required for the recruitment to the septal ring of downstream cell division proteins. The protein is Cell division protein ZipA of Pseudomonas aeruginosa (strain LESB58).